Reading from the N-terminus, the 358-residue chain is tRNA (guanine(26)-N(2))-dimethyltransferase (358 aa).

Residues 5-354 (VIRREGKAVF…ATYGEVERVL (350 aa)) enclose the Trm1 methyltransferase domain. Residues R39, R69, D87, D113, and A114 each coordinate S-adenosyl-L-methionine.

It belongs to the class I-like SAM-binding methyltransferase superfamily. Trm1 family.

It carries out the reaction guanosine(26) in tRNA + 2 S-adenosyl-L-methionine = N(2)-dimethylguanosine(26) in tRNA + 2 S-adenosyl-L-homocysteine + 2 H(+). Its function is as follows. Dimethylates a single guanine residue at position 26 of a number of tRNAs using S-adenosyl-L-methionine as donor of the methyl groups. In Pyrobaculum calidifontis (strain DSM 21063 / JCM 11548 / VA1), this protein is tRNA (guanine(26)-N(2))-dimethyltransferase.